Consider the following 219-residue polypeptide: ADP-sugar pyrophosphatase (219 aa).

Met1 carries the N-acetylmethionine modification. Residues Ser3 and Ser10 each carry the phosphoserine modification. Substrate is bound at residue Trp28. A Glycyl lysine isopeptide (Lys-Gly) (interchain with G-Cter in SUMO2) cross-link involves residue Lys42. The residue at position 45 (Thr45) is a Phosphothreonine. Residues 46–47 (WE) and Arg51 contribute to the substrate site. Positions 57–197 (QTADGVAVIP…EEHLTVDARV (141 aa)) constitute a Nudix hydrolase domain. Phosphotyrosine is present on Tyr74. Arg84 is a binding site for substrate. Mg(2+) is bound at residue Ala96. The short motif at 97 to 118 (GLIDDGETPEAAALRELEEETG) is the Nudix box element. Residue Leu98 participates in substrate binding. Mg(2+) contacts are provided by Glu112 and Glu116. Asp133 provides a ligand contact to substrate. A Mg(2+)-binding site is contributed by Glu166. Residues Lys210 and Lys218 each carry the N6-acetyllysine modification.

This sequence belongs to the Nudix hydrolase family. As to quaternary structure, homodimer. Interacts with PARG. It depends on Mg(2+) as a cofactor. Post-translationally, phosphorylation at Thr-45 is required for homodimer stability; dephosphorylation results in destabilization of the homodimer. Dephosphorylation at Thr-45 promotes the ATP-synthesis activity. In terms of tissue distribution, widely expressed. Most abundant in liver.

It is found in the nucleus. The enzyme catalyses D-ribose 5-phosphate + ATP + H(+) = ADP-D-ribose + diphosphate. It catalyses the reaction ADP-D-ribose + H2O = D-ribose 5-phosphate + AMP + 2 H(+). The catalysed reaction is 8-oxo-dGDP + H2O = 8-oxo-dGMP + phosphate + H(+). In terms of biological role, enzyme that can either act as an ADP-sugar pyrophosphatase in absence of diphosphate or catalyze the synthesis of ATP in presence of diphosphate. In absence of diphosphate, hydrolyzes with similar activities various modified nucleoside diphosphates such as ADP-ribose, ADP-mannose, ADP-glucose, 8-oxo-GDP and 8-oxo-dGDP. Can also hydrolyze other nucleotide sugars with low activity. In presence of diphosphate, mediates the synthesis of ATP in the nucleus by catalyzing the conversion of ADP-ribose to ATP and ribose 5-phosphate. Nuclear ATP synthesis takes place when dephosphorylated at Thr-45. Nuclear ATP generation is required for extensive chromatin remodeling events that are energy-consuming. Does not play a role in U8 snoRNA decapping activity. Binds U8 snoRNA. This is ADP-sugar pyrophosphatase (NUDT5) from Homo sapiens (Human).